The following is a 180-amino-acid chain: Large ribosomal subunit protein uL18m (180 aa).

Belongs to the universal ribosomal protein uL18 family. As to quaternary structure, component of the mitochondrial ribosome large subunit (39S) which comprises a 16S rRNA and about 50 distinct proteins.

The protein resides in the mitochondrion. Together with thiosulfate sulfurtransferase (TST), acts as a mitochondrial import factor for the cytosolic 5S rRNA. The precursor form shows RNA chaperone activity; is able to fold the 5S rRNA into an import-competent conformation that is recognized by rhodanese (TST). Both the cytoplasmic and mitochondrial forms are able to bind to the helix IV-loop D in the gamma domain of the 5S rRNA. The sequence is that of Large ribosomal subunit protein uL18m (MRPL18) from Bos taurus (Bovine).